The following is a 298-amino-acid chain: MTYQEWRQFAEHVLMKNKENDPFLDVKSESVLLLQTVTKRSKASILAFSETVLTEVELQQLAQLLMRRAKGEPIAYILGEKAFWSLSLKVSEHTLIPRPDTEVLVEHALDFAKQRVTSAHVSGELSILDLGTGTGAIALALAAELTPLTQKCGINLNILGVDRIAEAVALAKDNAKQNELKVNFLQSVWFDALNPEIRFDLIVSNPPYIDKNDPHLTQGDVRFEPLSALVAAEEGYADIRHIIEQAPLFLKPQGALLLEHGWQQAEKVRSIFQKNLWHNVATLKDYSGNERVTLGCWR.

Residues Gly-131–Gly-135, Asp-162, Trp-189, and Asn-205 contribute to the S-adenosyl-L-methionine site. Residue Asn-205–Tyr-208 coordinates substrate.

It belongs to the protein N5-glutamine methyltransferase family. PrmC subfamily.

The enzyme catalyses L-glutaminyl-[peptide chain release factor] + S-adenosyl-L-methionine = N(5)-methyl-L-glutaminyl-[peptide chain release factor] + S-adenosyl-L-homocysteine + H(+). Functionally, methylates the class 1 translation termination release factors RF1/PrfA and RF2/PrfB on the glutamine residue of the universally conserved GGQ motif. This chain is Release factor glutamine methyltransferase, found in Pasteurella multocida (strain Pm70).